Reading from the N-terminus, the 160-residue chain is Cytochrome b6-f complex subunit 4 (160 aa).

3 helical membrane-spanning segments follow: residues 36 to 56 (LLYI…GLAV), 95 to 115 (LLGV…PFLE), and 131 to 151 (TVFL…AMPI).

This sequence belongs to the cytochrome b family. PetD subfamily. In terms of assembly, the 4 large subunits of the cytochrome b6-f complex are cytochrome b6, subunit IV (17 kDa polypeptide, petD), cytochrome f and the Rieske protein, while the 4 small subunits are petG, petL, petM and petN. The complex functions as a dimer.

The protein localises to the plastid. Its subcellular location is the chloroplast thylakoid membrane. Functionally, component of the cytochrome b6-f complex, which mediates electron transfer between photosystem II (PSII) and photosystem I (PSI), cyclic electron flow around PSI, and state transitions. This is Cytochrome b6-f complex subunit 4 from Zygnema circumcarinatum (Green alga).